The primary structure comprises 607 residues: Type 3 secretion system secretin (607 aa).

The first 33 residues, 1–33 (MAPACTTAHRRRAPLAAVLMLSLLPLLSPHADA), serve as a signal peptide directing secretion. Residues 277–332 (ASSSDRVPVSPPLPGSGAAAAAGSPASVWPELSKGRRDESNPIDAGGGAELASDAP) form a disordered region. The segment covering 291 to 306 (GSGAAAAAGSPASVWP) has biased composition (low complexity).

This sequence belongs to the bacterial secretin family. T3SS SctC subfamily. The core secretion machinery of the T3SS is composed of approximately 20 different proteins, including cytoplasmic components, a base, an export apparatus and a needle. This subunit is part of the base, which anchors the injectisome in the bacterial cell envelope. Forms a stable homooligomeric complex.

Its subcellular location is the cell outer membrane. Its function is as follows. Component of the type III secretion system (T3SS), also called injectisome, which is used to inject bacterial effector proteins into eukaryotic host cells. Forms a ring-shaped multimeric structure with an apparent central pore in the outer membrane. Necessary for both basic pathogenicity and the induction of the hypersensitive response in resistant plants. This Xanthomonas euvesicatoria protein is Type 3 secretion system secretin.